The primary structure comprises 216 residues: Adenylate kinase (216 aa).

10 to 15 (GAGKGT) lines the ATP pocket. The tract at residues 30 to 59 (STGDMFRAAMKAETELGLQAKSFIDKGALV) is NMP. AMP-binding positions include threonine 31, arginine 36, 57–59 (ALV), 85–88 (GFPR), and glutamine 92. Positions 126 to 163 (GRRICKECGATYHLEFNPPAKADVCDKCGGELYQRSDD) are LID. Arginine 127 is an ATP binding site. Zn(2+) contacts are provided by cysteine 130 and cysteine 133. 136 to 137 (TY) is an ATP binding site. Residues cysteine 150 and cysteine 153 each coordinate Zn(2+). AMP-binding residues include arginine 160 and arginine 171. Residue glutamine 199 participates in ATP binding.

It belongs to the adenylate kinase family. Monomer.

The protein localises to the cytoplasm. It catalyses the reaction AMP + ATP = 2 ADP. It participates in purine metabolism; AMP biosynthesis via salvage pathway; AMP from ADP: step 1/1. In terms of biological role, catalyzes the reversible transfer of the terminal phosphate group between ATP and AMP. Plays an important role in cellular energy homeostasis and in adenine nucleotide metabolism. The protein is Adenylate kinase of Bacillus cytotoxicus (strain DSM 22905 / CIP 110041 / 391-98 / NVH 391-98).